A 474-amino-acid polypeptide reads, in one-letter code: tRNA-2-methylthio-N(6)-dimethylallyladenosine synthase (474 aa).

Positions 3-120 constitute an MTTase N-terminal domain; it reads KKLHIKTWGC…LPEMINSVRG (118 aa). 6 residues coordinate [4Fe-4S] cluster: Cys12, Cys49, Cys83, Cys157, Cys161, and Cys164. The Radical SAM core domain occupies 143-375; sequence RAEGPTAFVS…QERINQQAMA (233 aa). The TRAM domain maps to 378-441; that stretch reads RRMLGTTQRI…PNSLRGKVVR (64 aa).

It belongs to the methylthiotransferase family. MiaB subfamily. Monomer. [4Fe-4S] cluster is required as a cofactor.

The protein resides in the cytoplasm. It carries out the reaction N(6)-dimethylallyladenosine(37) in tRNA + (sulfur carrier)-SH + AH2 + 2 S-adenosyl-L-methionine = 2-methylsulfanyl-N(6)-dimethylallyladenosine(37) in tRNA + (sulfur carrier)-H + 5'-deoxyadenosine + L-methionine + A + S-adenosyl-L-homocysteine + 2 H(+). Functionally, catalyzes the methylthiolation of N6-(dimethylallyl)adenosine (i(6)A), leading to the formation of 2-methylthio-N6-(dimethylallyl)adenosine (ms(2)i(6)A) at position 37 in tRNAs that read codons beginning with uridine. The chain is tRNA-2-methylthio-N(6)-dimethylallyladenosine synthase from Escherichia coli (strain SE11).